We begin with the raw amino-acid sequence, 619 residues long: Dihydroxy-acid dehydratase (619 aa).

Aspartate 81 contacts Mg(2+). Cysteine 122 is a [2Fe-2S] cluster binding site. Mg(2+) contacts are provided by aspartate 123 and lysine 124. N6-carboxylysine is present on lysine 124. Residue cysteine 195 coordinates [2Fe-2S] cluster. Glutamate 494 contributes to the Mg(2+) binding site. Residue serine 520 is the Proton acceptor of the active site.

This sequence belongs to the IlvD/Edd family. In terms of assembly, homodimer. [2Fe-2S] cluster serves as cofactor. The cofactor is Mg(2+).

The catalysed reaction is (2R)-2,3-dihydroxy-3-methylbutanoate = 3-methyl-2-oxobutanoate + H2O. It catalyses the reaction (2R,3R)-2,3-dihydroxy-3-methylpentanoate = (S)-3-methyl-2-oxopentanoate + H2O. It functions in the pathway amino-acid biosynthesis; L-isoleucine biosynthesis; L-isoleucine from 2-oxobutanoate: step 3/4. The protein operates within amino-acid biosynthesis; L-valine biosynthesis; L-valine from pyruvate: step 3/4. In terms of biological role, functions in the biosynthesis of branched-chain amino acids. Catalyzes the dehydration of (2R,3R)-2,3-dihydroxy-3-methylpentanoate (2,3-dihydroxy-3-methylvalerate) into 2-oxo-3-methylpentanoate (2-oxo-3-methylvalerate) and of (2R)-2,3-dihydroxy-3-methylbutanoate (2,3-dihydroxyisovalerate) into 2-oxo-3-methylbutanoate (2-oxoisovalerate), the penultimate precursor to L-isoleucine and L-valine, respectively. This is Dihydroxy-acid dehydratase from Shewanella putrefaciens (strain CN-32 / ATCC BAA-453).